Reading from the N-terminus, the 229-residue chain is Large ribosomal subunit protein uL1 (229 aa).

It belongs to the universal ribosomal protein uL1 family. Part of the 50S ribosomal subunit.

Binds directly to 23S rRNA. The L1 stalk is quite mobile in the ribosome, and is involved in E site tRNA release. Functionally, protein L1 is also a translational repressor protein, it controls the translation of the L11 operon by binding to its mRNA. This Streptococcus pyogenes serotype M1 protein is Large ribosomal subunit protein uL1.